The following is a 65-amino-acid chain: Large ribosomal subunit protein bL35 (65 aa).

Residues 1–30 (MPKMKTNRGAAKRFRKTASGRFKSKQSHLR) form a disordered region. A compositionally biased stretch (basic residues) spans 10–30 (AAKRFRKTASGRFKSKQSHLR).

This sequence belongs to the bacterial ribosomal protein bL35 family.

The chain is Large ribosomal subunit protein bL35 from Pseudoalteromonas atlantica (strain T6c / ATCC BAA-1087).